A 146-amino-acid polypeptide reads, in one-letter code: SecB-like chaperone SmegB (146 aa).

It belongs to the SecB-like family.

Functionally, chaperone component of an orphan antitoxin chaperone (AC) system; there is no toxin gene in close genomic proximity. When expressed in E.coli complements the cold-sensitive phenotype of a secB deletion, suggesting it may have a generic chaperone function. Does not however complement the toxin-neutralizing effect of its M.tuberculosis paralog Rv1957 (AC P95257) in E.coli, probably because the antitoxin genes are not from the same family. This is SecB-like chaperone SmegB from Mycolicibacterium smegmatis (strain ATCC 700084 / mc(2)155) (Mycobacterium smegmatis).